The sequence spans 269 residues: Cytochrome c oxidase subunit 3 (269 aa).

Helical transmembrane passes span 21-41, 49-69, 90-110, 132-152, 167-187, 205-225, and 247-267; these read PWPM…GLTA, MFML…FKDI, GFLM…WAFL, ISAA…GVTM, TLYG…FQGL, FFAL…MLAM, and ILYL…VYWW.

It belongs to the cytochrome c oxidase subunit 3 family. As to quaternary structure, component of the cytochrome c oxidase (complex IV, CIV), a multisubunit enzyme composed of a catalytic core of 3 subunits and several supernumerary subunits. The complex exists as a monomer or a dimer and forms supercomplexes (SCs) in the inner mitochondrial membrane with ubiquinol-cytochrome c oxidoreductase (cytochrome b-c1 complex, complex III, CIII).

Its subcellular location is the mitochondrion inner membrane. The catalysed reaction is 4 Fe(II)-[cytochrome c] + O2 + 8 H(+)(in) = 4 Fe(III)-[cytochrome c] + 2 H2O + 4 H(+)(out). Functionally, component of the cytochrome c oxidase, the last enzyme in the mitochondrial electron transport chain which drives oxidative phosphorylation. The respiratory chain contains 3 multisubunit complexes succinate dehydrogenase (complex II, CII), ubiquinol-cytochrome c oxidoreductase (cytochrome b-c1 complex, complex III, CIII) and cytochrome c oxidase (complex IV, CIV), that cooperate to transfer electrons derived from NADH and succinate to molecular oxygen, creating an electrochemical gradient over the inner membrane that drives transmembrane transport and the ATP synthase. Cytochrome c oxidase is the component of the respiratory chain that catalyzes the reduction of oxygen to water. Electrons originating from reduced cytochrome c in the intermembrane space (IMS) are transferred via the dinuclear copper A center (CU(A)) of subunit 2 and heme A of subunit 1 to the active site in subunit 1, a binuclear center (BNC) formed by heme A3 and copper B (CU(B)). The BNC reduces molecular oxygen to 2 water molecules using 4 electrons from cytochrome c in the IMS and 4 protons from the mitochondrial matrix. The protein is Cytochrome c oxidase subunit 3 (COX3) of Debaryomyces hansenii (strain ATCC 36239 / CBS 767 / BCRC 21394 / JCM 1990 / NBRC 0083 / IGC 2968) (Yeast).